The chain runs to 271 residues: Ribosomal RNA small subunit methyltransferase A (271 aa).

S-adenosyl-L-methionine-binding residues include His-11, Leu-13, Gly-38, Glu-58, Asp-86, and Asn-101.

Belongs to the class I-like SAM-binding methyltransferase superfamily. rRNA adenine N(6)-methyltransferase family. RsmA subfamily.

It is found in the cytoplasm. It catalyses the reaction adenosine(1518)/adenosine(1519) in 16S rRNA + 4 S-adenosyl-L-methionine = N(6)-dimethyladenosine(1518)/N(6)-dimethyladenosine(1519) in 16S rRNA + 4 S-adenosyl-L-homocysteine + 4 H(+). In terms of biological role, specifically dimethylates two adjacent adenosines (A1518 and A1519) in the loop of a conserved hairpin near the 3'-end of 16S rRNA in the 30S particle. May play a critical role in biogenesis of 30S subunits. This Helicobacter pylori (strain G27) protein is Ribosomal RNA small subunit methyltransferase A.